We begin with the raw amino-acid sequence, 330 residues long: Calponin-3 (330 aa).

N6-acetyllysine is present on Lys-23. The Calponin-homology (CH) domain maps to 26–130 (QQAEEDLRNW…TLVALAGLAK (105 aa)). At Lys-158 the chain carries N6-methyllysine. Calponin-like repeat units lie at residues 164–189 (IGLQ…RHLY), 204–229 (ISLQ…RDIY), and 243–268 (ISLQ…RQVY). The tract at residues 279-330 (PVIHNGSQGTGTNGSEISDSDYQAEYPDEYHGEYPDDYPREYQYGDDQGIDY) is disordered. A compositionally biased stretch (basic and acidic residues) spans 306-318 (DEYHGEYPDDYPR).

Belongs to the calponin family.

In terms of biological role, thin filament-associated protein that is implicated in the regulation and modulation of smooth muscle contraction. It is capable of binding to actin, calmodulin and tropomyosin. The interaction of calponin with actin inhibits the actomyosin Mg-ATPase activity. In Mus musculus (Mouse), this protein is Calponin-3 (Cnn3).